The following is a 177-amino-acid chain: MSTKAWNASRLSGPDPSTPWSLRKPLQHGSRPPKGKRLTVCPPTRPKQTIRISASHASQQLDQAKAACLAVTIKDLEEATAVMRSWEHSLVTPQCIAPRYSIIMFMITAVKRLRESKMLTLSWFNQALMMVSKSGEEMRNLRTAMWILANLIPREVLPLTGDLLPSLQQQEPPMLKQ.

Over residues 1–10 the composition is skewed to polar residues; it reads MSTKAWNASR. Residues 1–38 are disordered; the sequence is MSTKAWNASRLSGPDPSTPWSLRKPLQHGSRPPKGKRL.

The protein belongs to the morbillivirus protein C family.

This is Protein C (P/V/C) from Rinderpest virus (strain RBOK) (RDV).